We begin with the raw amino-acid sequence, 196 residues long: Auxin-induced protein 22B (196 aa).

Residues 18 to 22 (LRLGL) carry the EAR-like (transcriptional repression) motif. The interval 44-74 (RQVRETSQDSVSISKASHHQQHVETVSAPPP) is disordered. One can recognise a PB1 domain in the interval 99 to 186 (GIFVKVSMDG…SCKRLRIMKG (88 aa)).

Belongs to the Aux/IAA family. As to quaternary structure, homodimers and heterodimers.

The protein resides in the nucleus. Its function is as follows. Aux/IAA proteins are short-lived transcriptional factors that function as repressors of early auxin response genes at low auxin concentrations. Repression is thought to result from the interaction with auxin response factors (ARFs), proteins that bind to the auxin-responsive promoter element (AuxRE). Formation of heterodimers with ARF proteins may alter their ability to modulate early auxin response genes expression. The protein is Auxin-induced protein 22B (AUX22B) of Vigna radiata var. radiata (Mung bean).